A 148-amino-acid polypeptide reads, in one-letter code: Large ribosomal subunit protein uL15 (148 aa).

Positions 18-38 (GYGRVGKHRKHPGGRGNAGGL) are disordered.

Belongs to the universal ribosomal protein uL15 family.

This Dictyostelium discoideum (Social amoeba) protein is Large ribosomal subunit protein uL15 (rpl27a).